The chain runs to 556 residues: Phosphoglucomutase (556 aa).

Residues Arg-22 and Ser-114 each contribute to the alpha-D-glucose 1,6-bisphosphate site. Ser-114 acts as the Phosphoserine intermediate in catalysis. Positions 114, 279, 281, and 283 each coordinate Mg(2+). Ser-114 carries the post-translational modification Phosphoserine. 6 residues coordinate alpha-D-glucose 1,6-bisphosphate: Asp-283, Arg-284, Thr-347, Glu-366, Ser-368, and Lys-379.

The protein belongs to the phosphohexose mutase family. Monomer. It depends on Mg(2+) as a cofactor.

The protein localises to the cytoplasm. It carries out the reaction alpha-D-glucose 1-phosphate = alpha-D-glucose 6-phosphate. The enzyme catalyses O-phospho-L-seryl-[protein] + alpha-D-glucose 1-phosphate = alpha-D-glucose 1,6-bisphosphate + L-seryl-[protein]. It catalyses the reaction alpha-D-glucose 1,6-bisphosphate + L-seryl-[protein] = O-phospho-L-seryl-[protein] + alpha-D-glucose 6-phosphate. Catalyzes the reversible isomerization of alpha-D-glucose 1-phosphate to alpha-D-glucose 6-phosphate. The mechanism proceeds via the intermediate compound alpha-D-glucose 1,6-bisphosphate. Key enzyme in hexose metabolism. The reverse reaction is an essential step for biosynthesis because glucose 1-phosphate is the starting point for the synthesis of UDP-glucose, which acts as a precursor for the synthesis of oligosaccharides and trehalose. This is Phosphoglucomutase (pgmB) from Emericella nidulans (strain FGSC A4 / ATCC 38163 / CBS 112.46 / NRRL 194 / M139) (Aspergillus nidulans).